Consider the following 556-residue polypeptide: Guanosine-diphosphatase (556 aa).

Over 1–12 (MTPTMKSIARRK) the chain is Cytoplasmic. A helical; Signal-anchor for type II membrane protein membrane pass occupies residues 13 to 33 (ALLIALSIFAVTFILWNGFPG). Topologically, residues 34–556 (SSNRPLPSSN…GWNCNVKEEI (523 aa)) are lumenal. The active-site Proton acceptor is Glu-256. Asn-372 carries an N-linked (GlcNAc...) asparagine glycan.

This sequence belongs to the GDA1/CD39 NTPase family. It depends on Ca(2+) as a cofactor. The cofactor is Mn(2+).

It localises to the golgi apparatus membrane. The catalysed reaction is GDP + H2O = GMP + phosphate + H(+). It participates in protein modification; protein glycosylation. In terms of biological role, after transfer of sugars to endogenous macromolecular acceptors, the enzyme converts nucleoside diphosphates to nucleoside monophosphates which in turn exit the Golgi lumen in a coupled antiporter reaction, allowing entry of additional nucleotide sugar from the cytosol. This is Guanosine-diphosphatase (gdp1) from Schizosaccharomyces pombe (strain 972 / ATCC 24843) (Fission yeast).